A 215-amino-acid chain; its full sequence is Cytochrome b6 (215 aa).

The chain crosses the membrane as a helical span at residues 32–52; it reads IFYCFGGIVFTCFLVQVATGF. Heme c is bound at residue Cys-35. The heme b site is built by His-86 and His-100. 3 helical membrane passes run 90–110, 116–136, and 186–206; these read ASMM…TGGF, LTWV…VTGY, and AHTF…FLMI. His-187 and His-202 together coordinate heme b.

The protein belongs to the cytochrome b family. PetB subfamily. In terms of assembly, the 4 large subunits of the cytochrome b6-f complex are cytochrome b6, subunit IV (17 kDa polypeptide, PetD), cytochrome f and the Rieske protein, while the 4 small subunits are PetG, PetL, PetM and PetN. The complex functions as a dimer. Heme b serves as cofactor. Heme c is required as a cofactor.

Its subcellular location is the plastid. It localises to the chloroplast thylakoid membrane. In terms of biological role, component of the cytochrome b6-f complex, which mediates electron transfer between photosystem II (PSII) and photosystem I (PSI), cyclic electron flow around PSI, and state transitions. The polypeptide is Cytochrome b6 (Skeletonema costatum (Marine centric diatom)).